We begin with the raw amino-acid sequence, 422 residues long: MQQPQPQGQQQPGPGQQLGGQGAAPGAGGGPGGGPGPGPCLRRELKLLESIFHRGHERFRIASACLDELSCEFLLAGAGGAGAGAAPGPHLPPRGSVPGDPVRIHCNITESYPAVPPIWSVESDDPNLAAVLERLVDIKKGNTLLLQHLKRIISDLCKLYNLPQHPDVEMLDQPLPAEQCTQEDVSSEDEDEEMPEDTEDLDHYEMKEEEPAEGKKSEDDGIGKENLAILEKIKKNQRQDYLNGAVSGSVQATDRLMKELRDIYRSQSFKGGNYAVELVNDSLYDWNVKLLKVDQDSALHNDLQILKEKEGADFILLNFSFKDNFPFDPPFVRVVSPVLSGGYVLGGGAICMELLTKQGWSSAYSIESVIMQISATLVKGKARVQFGANKSQYSLTRAQQSYKSLVQIHEKNGWYTPPKEDG.

Methionine 1 carries the post-translational modification N-acetylmethionine. The segment covering 1 to 15 (MQQPQPQGQQQPGPG) has biased composition (low complexity). Disordered stretches follow at residues 1-40 (MQQP…PGPC) and 174-221 (PLPA…EDDG). Gly residues predominate over residues 16–35 (QQLGGQGAAPGAGGGPGGGP). The segment covering 185–200 (VSSEDEDEEMPEDTED) has biased composition (acidic residues). Residues 212-221 (AEGKKSEDDG) show a composition bias toward basic and acidic residues. The region spanning 251-415 (QATDRLMKEL…VQIHEKNGWY (165 aa)) is the UBC core domain. Catalysis depends on cysteine 351, which acts as the Glycyl thioester intermediate.

The protein belongs to the ubiquitin-conjugating enzyme family. Monomer and homodimer. Only the homodimer is linked to ubiquitin through thiolester activation. Interacts (via N-terminus) with B4GALT1 (via N-terminal cytoplasmic domain). The interaction is direct. In terms of processing, autoubiquitinated in vitro in the presence of NEDD4L. Widely expressed.

It localises to the nucleus. The protein resides in the cell projection. Its subcellular location is the filopodium. The protein localises to the cytoplasm. It is found in the cytosol. The enzyme catalyses S-ubiquitinyl-[E1 ubiquitin-activating enzyme]-L-cysteine + [E2 ubiquitin-conjugating enzyme]-L-cysteine = [E1 ubiquitin-activating enzyme]-L-cysteine + S-ubiquitinyl-[E2 ubiquitin-conjugating enzyme]-L-cysteine.. Its pathway is protein modification; protein ubiquitination. Functionally, catalyzes the covalent attachment of ubiquitin to other proteins. May be involved in hormonal homeostasis in females. Involved in regulation of B4GALT1 cell surface expression, B4GALT1-mediated cell adhesion to laminin and embryoid body formation. The sequence is that of Ubiquitin-conjugating enzyme E2 Q1 (UBE2Q1) from Homo sapiens (Human).